We begin with the raw amino-acid sequence, 102 residues long: Large ribosomal subunit protein uL24 (102 aa).

Belongs to the universal ribosomal protein uL24 family. Part of the 50S ribosomal subunit.

Its function is as follows. One of two assembly initiator proteins, it binds directly to the 5'-end of the 23S rRNA, where it nucleates assembly of the 50S subunit. In terms of biological role, one of the proteins that surrounds the polypeptide exit tunnel on the outside of the subunit. In Alkaliphilus oremlandii (strain OhILAs) (Clostridium oremlandii (strain OhILAs)), this protein is Large ribosomal subunit protein uL24.